Reading from the N-terminus, the 153-residue chain is Small ribosomal subunit protein uS13 (153 aa).

The protein belongs to the universal ribosomal protein uS13 family. As to quaternary structure, part of the 30S ribosomal subunit. Forms a loose heterodimer with protein S19. Forms two bridges to the 50S subunit in the 70S ribosome.

Functionally, located at the top of the head of the 30S subunit, it contacts several helices of the 16S rRNA. In the 70S ribosome it contacts the 23S rRNA (bridge B1a) and protein L5 of the 50S subunit (bridge B1b), connecting the 2 subunits; these bridges are implicated in subunit movement. This is Small ribosomal subunit protein uS13 from Pyrobaculum islandicum (strain DSM 4184 / JCM 9189 / GEO3).